A 751-amino-acid chain; its full sequence is Ecdysteroid-phosphate phosphatase (751 aa).

The UBA domain occupies 16–60 (CISKQHLTPLQTLLQMGFPRHRAEKALASTGNRGVQIASDWLLAH). An SH3 domain is found at 271–336 (ATKQVQKVVY…PVNYTERTAE (66 aa)). Disordered stretches follow at residues 367 to 394 (GRSI…FEES) and 458 to 484 (EPPA…PGSL). Over residues 466-479 (RPDDTLSVHSDHSL) the composition is skewed to basic and acidic residues. The interval 490-751 (KNRKIYIMRH…RFEWNALSAT (262 aa)) is phosphatase-like. Residue R498 is part of the active site. H499 (tele-phosphohistidine intermediate) is an active-site residue. Residue H681 is part of the active site.

Its subcellular location is the cytoplasm. It is found in the cytosol. The protein localises to the nucleus. It carries out the reaction ecdysone 22-phosphate + H2O = ecdysone + phosphate. It catalyses the reaction 20-hydroxyecdysone 22-phosphate + H2O = 20-hydroxyecdysone + phosphate. The enzyme catalyses 2-deoxyecdysone 22-phosphate + H2O = 2-deoxyecdysone + phosphate. Its function is as follows. Steroid phosphatase that dephosphorylates ecdysteroids such as ecdysone 22-phosphate (E22P), 3-epi-ecdysone 22-phosphate (E22P) and 3-epi-ecdysone 2-phosphate (E2P). Likely catalyzes the conversion of inactive phosphorylated ecdysteroids into their active forms. Shows high activity towards ecdysone 22-phosphate (E22P), but is also significantly active against 3-epi-ecdysone 22-phosphate (E22P) and 3-epi-ecdysone 2-phosphate (E2P). Also displays acid phosphatase activity towards 4-nitrophenyl phosphate (pNNP) in vitro. Has no activity towards 3-epi-ecdysone 3-phosphate (E3P). This is Ecdysteroid-phosphate phosphatase from Drosophila melanogaster (Fruit fly).